The chain runs to 1958 residues: Probable Rho GTPase-activating protein CG5521 (1958 aa).

Disordered regions lie at residues 1-21 (MFTK…QDSK), 400-424 (PPFL…RSQR), and 635-804 (GSVW…GIEG). Residues 400–414 (PPFLLEPNDDPPPPS) are compositionally biased toward pro residues. A compositionally biased stretch (low complexity) spans 640–656 (GSGSNSAANGGSAASAA). Residues serine 718, serine 764, and serine 767 each carry the phosphoserine modification. Basic and acidic residues predominate over residues 758–774 (DLRRAMSLDSLARKGDA). Acidic residues predominate over residues 775 to 785 (EETDSYQEGDN). 4 positions are modified to phosphoserine: serine 787, serine 791, serine 793, and serine 795. Residues 788–800 (GAGSRSPSPTASS) are compositionally biased toward polar residues. Tyrosine 980 carries the phosphotyrosine modification. The interval 1534–1568 (HSTQAPSPALRHASSNSSLQQPDQRSLHSTTASFD) is disordered. Positions 1546-1568 (ASSNSSLQQPDQRSLHSTTASFD) are enriched in polar residues. Serine 1551 is modified (phosphoserine). The 208-residue stretch at 1612–1819 (LRNVDLQKCR…EERNRSLDSV (208 aa)) folds into the Rap-GAP domain. The segment at 1903 to 1958 (ATGMSSASPRGPRKLGAPFKSVTKKHSLQHIAVGGGAGAGGDTPPESPTLPQRRFK) is disordered. Threonine 1945 carries the post-translational modification Phosphothreonine. At serine 1949 the chain carries Phosphoserine.

In Drosophila melanogaster (Fruit fly), this protein is Probable Rho GTPase-activating protein CG5521.